A 420-amino-acid polypeptide reads, in one-letter code: NEDD8-specific protease 1 (420 aa).

Residues 257-281 (KSSDSSETSHESSNSNLKKSSESGS) show a composition bias toward low complexity. A disordered region spans residues 257 to 420 (KSSDSSETSH…EELVSGDFPF (164 aa)). The span at 286-296 (NNHESDKDLHH) shows a compositional bias: basic and acidic residues. Residues 297-310 (EGHHHHHHHHHHHH) are compositionally biased toward basic residues. A compositionally biased stretch (basic and acidic residues) spans 311–324 (SHDDDPSSPAEKKQ). A phosphoserine mark is found at serine 329, serine 340, and serine 351. A compositionally biased stretch (basic and acidic residues) spans 355–377 (NKEDHLPLLSDEKLDKSAIDKIE).

The protein belongs to the peptidase C48 family. Interacts with csn1. It is, however, not a component of the signalosome.

It localises to the cytoplasm. Protease that catalyzes two essential functions in the NEDD8 pathway: processing of full-length NEDD8 to its mature form and deconjugation of NEDD8 from targeted proteins such as the pcu1, pcu2 and pcu4 cullins and other proteins. The sequence is that of NEDD8-specific protease 1 (nep1) from Schizosaccharomyces pombe (strain 972 / ATCC 24843) (Fission yeast).